Reading from the N-terminus, the 280-residue chain is 4-diphosphocytidyl-2-C-methyl-D-erythritol kinase (280 aa).

Lysine 8 is an active-site residue. Residue 91 to 101 (PVAAGLAGGSA) coordinates ATP. The active site involves aspartate 133.

This sequence belongs to the GHMP kinase family. IspE subfamily.

The catalysed reaction is 4-CDP-2-C-methyl-D-erythritol + ATP = 4-CDP-2-C-methyl-D-erythritol 2-phosphate + ADP + H(+). It participates in isoprenoid biosynthesis; isopentenyl diphosphate biosynthesis via DXP pathway; isopentenyl diphosphate from 1-deoxy-D-xylulose 5-phosphate: step 3/6. Catalyzes the phosphorylation of the position 2 hydroxy group of 4-diphosphocytidyl-2C-methyl-D-erythritol. The polypeptide is 4-diphosphocytidyl-2-C-methyl-D-erythritol kinase (Clostridium acetobutylicum (strain ATCC 824 / DSM 792 / JCM 1419 / IAM 19013 / LMG 5710 / NBRC 13948 / NRRL B-527 / VKM B-1787 / 2291 / W)).